We begin with the raw amino-acid sequence, 437 residues long: MIGLLTLAVFVATFAVIYRWAEGSHLAVLAGAAALVVIGTISGSYTPVMALRSVYFETLALIFGMAAISALLARSGVYAYLAAGTAELSQGQGRWILVMMALVTYGISLASNSLVTVAVVVPVTLTVCFRTGIDPVPVIIAEIIAANLGGASTMIGDFPNMILASAGKLHFNDFIAGMMPVCLILLAVMLVFFERRLGDWKGSEIPVDPVWARGEALRHSAIDRRLLSYGLIIFGVTVAGLILAGPLKVRPGWIAFVAGVTALGLGRFKDDEFFSACGGTDILFYGGLFVMVGALTSVGILDWAVNWLEGITAAHDRVRAILLMWMAAAVTIFVGGGTSAAVFAPVAATLRLDGDGQAAWWALALGIMAGSVAALPGATAGSLAMTQYSGFVKRHPELASAAAAGLQFTHREYVRWGMPLMGIFLVLGTVYIAVLVG.

11 helical membrane-spanning segments follow: residues 26–46 (LAVL…GSYT), 53–73 (SVYF…ALLA), 95–115 (WILV…NSLV), 136–156 (VPVI…TMIG), 174–194 (FIAG…VFFE), 226–246 (LLSY…LAGP), 252–268 (GWIA…LGRF), 281–301 (DILF…VGIL), 320–340 (AILL…GTSA), 358–378 (AAWW…LPGA), and 416–436 (WGMP…AVLV).

The protein belongs to the arsenite-antimonite (ArsB) efflux (TC 2.A.45) family.

Its subcellular location is the magnetosome membrane. Functionally, plays a role in biomineralization; might regulate pH in the magnetosome. This Paramagnetospirillum magneticum (strain ATCC 700264 / AMB-1) (Magnetospirillum magneticum) protein is Magnetosome protein MamN (mamN).